We begin with the raw amino-acid sequence, 258 residues long: MDKKNRPIGFFDSGVGGLSVMKEAIRLMPNENYIYFGDSKNAPYGIKTVEEVRTLTFNAVESLLEKNVKAIVVACNTATSAAIDLVRSKYKNIPIIGIEPALKLATKYNRKGNIIIMATPMTLKEKKFKSLMEKYGENYDIVSLPCAKLVEFIEHGILSGEELEEYLKEKFKSYKNNDIGVVVLGCTHYPFIKETLYKVIDKDIPIIDGGLGTSQELRRRLEEKNLLNTEDKKGSITIINSNGSEKMIELSKKLIESS.

Residues 12–13 (DS) and 44–45 (YG) contribute to the substrate site. The active-site Proton donor/acceptor is the C75. Substrate is bound at residue 76-77 (NT). The active-site Proton donor/acceptor is the C186. 187 to 188 (TH) is a substrate binding site.

The protein belongs to the aspartate/glutamate racemases family.

It catalyses the reaction L-glutamate = D-glutamate. The protein operates within cell wall biogenesis; peptidoglycan biosynthesis. Provides the (R)-glutamate required for cell wall biosynthesis. The sequence is that of Glutamate racemase from Clostridium botulinum (strain Alaska E43 / Type E3).